A 466-amino-acid chain; its full sequence is 23S rRNA (uracil(1939)-C(5))-methyltransferase RlmD (466 aa).

One can recognise a TRAM domain in the interval lysine 11–lysine 69. [4Fe-4S] cluster-binding residues include cysteine 82, cysteine 88, cysteine 91, and cysteine 184. S-adenosyl-L-methionine is bound by residues glutamine 287, phenylalanine 316, asparagine 321, glutamate 337, asparagine 364, and aspartate 385. The active-site Nucleophile is cysteine 411.

Belongs to the class I-like SAM-binding methyltransferase superfamily. RNA M5U methyltransferase family. RlmD subfamily.

The enzyme catalyses uridine(1939) in 23S rRNA + S-adenosyl-L-methionine = 5-methyluridine(1939) in 23S rRNA + S-adenosyl-L-homocysteine + H(+). Catalyzes the formation of 5-methyl-uridine at position 1939 (m5U1939) in 23S rRNA. The protein is 23S rRNA (uracil(1939)-C(5))-methyltransferase RlmD of Photobacterium profundum (strain SS9).